The primary structure comprises 441 residues: GTPase Der (441 aa).

EngA-type G domains lie at 4–169 and 178–353; these read SIVA…PPEA and PRIA…QNRN. Residues 10 to 17, 57 to 61, 120 to 123, 184 to 191, 231 to 235, and 296 to 299 each bind GTP; these read GRPNVGKS, DTGGI, NKVD, GKPNVGKS, DTAGL, and NKWD. One can recognise a KH-like domain in the interval 354 to 438; sequence LRISTGVLNE…SLKFFIRERK (85 aa).

The protein belongs to the TRAFAC class TrmE-Era-EngA-EngB-Septin-like GTPase superfamily. EngA (Der) GTPase family. As to quaternary structure, associates with the 50S ribosomal subunit.

Functionally, GTPase that plays an essential role in the late steps of ribosome biogenesis. This Lachnoclostridium phytofermentans (strain ATCC 700394 / DSM 18823 / ISDg) (Clostridium phytofermentans) protein is GTPase Der.